Consider the following 220-residue polypeptide: Redox-sensing transcriptional repressor Rex (220 aa).

The segment at residues 17–56 (LYARSLRYLLQEGVESVSSQELGDRINVTAAQIRKDLSYF) is a DNA-binding region (H-T-H motif). Position 91-96 (91-96 (GIGHLG)) interacts with NAD(+).

This sequence belongs to the transcriptional regulatory Rex family. Homodimer.

It is found in the cytoplasm. Functionally, modulates transcription in response to changes in cellular NADH/NAD(+) redox state. The polypeptide is Redox-sensing transcriptional repressor Rex (Roseiflexus sp. (strain RS-1)).